A 367-amino-acid chain; its full sequence is MTNIRKSHPLIKIINNSFIDLPAPSNISSWWNFGSLLGICLALQILTGLFLAMHYTSDTATAFNSVSHMCREVNYGWVLRYMHANGASMFFICLYLHIGRGLYYGSYMFKETWNMGVILLFAVMATAFMGYVLPWGQMSFWGATVITNLLSAIPYIGANLVEWIWGGFSVDKATLTRFFAFHFLLPFIISALVMVHLLFLHETGSNNPTGIPSNMDMIPFHPYYTIKDILGFFMMMLILLCLVLFSPDMLGDPDNYMPANPLNTPPHIKPEWYFLFAYAILRSIPNKLGGVLALVLSILILIIIPFLHTSKQRSMTFRPFSQCLFWLLVADLLTLTWIGGQPVEHPYIIIGQLASILYFMIIIVIMP.

Transmembrane regions (helical) follow at residues 33 to 53 (FGSL…FLAM), 77 to 98 (WVLR…YLHI), 113 to 133 (WNMG…GYVL), and 178 to 198 (FFAF…VHLL). His-83 and His-97 together coordinate heme b. Residues His-182 and His-196 each coordinate heme b. His-201 is a binding site for a ubiquinone. The next 4 helical transmembrane spans lie at 226-246 (IKDI…VLFS), 288-308 (LGGV…PFLH), 320-340 (FSQC…WIGG), and 347-367 (YIII…VIMP).

This sequence belongs to the cytochrome b family. The cytochrome bc1 complex contains 11 subunits: 3 respiratory subunits (MT-CYB, CYC1 and UQCRFS1), 2 core proteins (UQCRC1 and UQCRC2) and 6 low-molecular weight proteins (UQCRH/QCR6, UQCRB/QCR7, UQCRQ/QCR8, UQCR10/QCR9, UQCR11/QCR10 and a cleavage product of UQCRFS1). This cytochrome bc1 complex then forms a dimer. Requires heme b as cofactor.

It localises to the mitochondrion inner membrane. Its function is as follows. Component of the ubiquinol-cytochrome c reductase complex (complex III or cytochrome b-c1 complex) that is part of the mitochondrial respiratory chain. The b-c1 complex mediates electron transfer from ubiquinol to cytochrome c. Contributes to the generation of a proton gradient across the mitochondrial membrane that is then used for ATP synthesis. This is Cytochrome b (MT-CYB) from Hypsugo savii (Savi's pipistrelle).